Consider the following 228-residue polypeptide: UPF0758 protein CLK_2387 (228 aa).

Residues lysine 106 to isoleucine 228 enclose the MPN domain. Zn(2+) is bound by residues histidine 177, histidine 179, and aspartate 190. The JAMM motif signature appears at histidine 177 to aspartate 190.

Belongs to the UPF0758 family.

The protein is UPF0758 protein CLK_2387 of Clostridium botulinum (strain Loch Maree / Type A3).